A 312-amino-acid polypeptide reads, in one-letter code: MDKEWLEVCIYTSSEALEAISGILYNTGVKGVSIEDPKDIEFKKKHPGDWDYFDETLLKVKDTAIVKGYYKEDDKFNEYLDYIKKSVSNLDQFGIDKGEGLVEVHKVNEEDWENNWKKYYKPTKVSNKIVIKPIWENYDKKQEEIIVELDPGMAFGTGTHETTRMCINALEKYIKEDRTVFDIGCGSGILSIAAAKLGAKHVIGVDLDPVAVKSSKENIKYNNLDNIEILEGNLMEVVEGRANIVVANIIADVIIFLTEGVKAFIEKGGYFIASGIINSRKEDVIKKLEETGFVIEEVREEGEWVCIISKIN.

Residues threonine 163, glycine 184, aspartate 206, and asparagine 248 each contribute to the S-adenosyl-L-methionine site.

This sequence belongs to the methyltransferase superfamily. PrmA family.

It is found in the cytoplasm. The enzyme catalyses L-lysyl-[protein] + 3 S-adenosyl-L-methionine = N(6),N(6),N(6)-trimethyl-L-lysyl-[protein] + 3 S-adenosyl-L-homocysteine + 3 H(+). Its function is as follows. Methylates ribosomal protein L11. This Clostridium botulinum (strain Loch Maree / Type A3) protein is Ribosomal protein L11 methyltransferase.